Consider the following 152-residue polypeptide: Transcriptional regulator MraZ (152 aa).

2 consecutive SpoVT-AbrB domains span residues 5–51 (VNSI…PLPE) and 80–123 (AAEC…DEVL).

This sequence belongs to the MraZ family. In terms of assembly, forms oligomers.

It is found in the cytoplasm. Its subcellular location is the nucleoid. In Methylococcus capsulatus (strain ATCC 33009 / NCIMB 11132 / Bath), this protein is Transcriptional regulator MraZ.